Consider the following 851-residue polypeptide: MNNTDKLDSHTPMMQQYLRLKAQHPEILLFYRMGDFYELFYSDAKRASQLLDISLTKRGASAGEPIPMAGVPYHSIENYLAKLVQLGESAAICEQIGDPATSKGPVERKVVRIVTPGTVSDEALLQERQDNLLAAIWQDARGFGYATLDISSGRFRVAEPADLETMAAELQRTNPAELLYPENFEQMSLIEHRHGLRRRPLWEFELETAKQQLNLQFGTRDLIGFGVEQAHQALRAAGCLLQYVKDTQRTSLPHIRGLTMERQQDGIVMDAATRRNLELTQNLSGGTENTLAAILDCTVTAMGSRMLKRWLHMPIRDTKVLTDRQQAIGGLQDITAELQTPLRQVGDLERILARLALRTARPRDLARMRHAFQQLPEIHRLLQPVNVPHIQNLLSQVGQFDELQDLLERAIVETPPVLVRDGGVIASGYNAELDEWRALADGATDYLDRLEIREREKLGLDTLKVGFNGVHGYYIQVSRGQSHLVPIHYVRRQTLKNAERYIIPELKEYEDKVLTSKGKALAIEKGLYEEIFDLLLPHLPELQTSANALAELDVLANLAERAETLNYNCPVLSDKPGIKITGGRHPVVEQVLSEPFISNPLTLSPQRRMLIITGPNMGGKSTYMRQTALIVLLAHMGSYVPADQATIGPVDRIFTRVGAADDLASGRSTFMVEMTETANILHNATEQSLVLMDEIGRGTSTYDGLSLAWACAENLASRIKAMTLFATHYFELTTLPEKMEGVVNVHLDALEHGETIAFMHSVQDGAASKSYGLAVAALAGVPRDVIKRARQKLKELESLSNNAAASKIDGSQLTLLNEEVSPAVEALEALDPDSLSPRQALEWIYRLKNMV.

Position 614–621 (614–621 (GPNMGGKS)) interacts with ATP.

The protein belongs to the DNA mismatch repair MutS family.

Functionally, this protein is involved in the repair of mismatches in DNA. It is possible that it carries out the mismatch recognition step. This protein has a weak ATPase activity. This is DNA mismatch repair protein MutS from Yersinia enterocolitica serotype O:8 / biotype 1B (strain NCTC 13174 / 8081).